We begin with the raw amino-acid sequence, 214 residues long: Pyridoxine/pyridoxamine 5'-phosphate oxidase (214 aa).

Substrate is bound by residues arginine 8–tyrosine 11 and lysine 67. FMN-binding positions include arginine 62–lysine 67, tyrosine 77–threonine 78, lysine 84, and glutamine 106. Residues tyrosine 124, arginine 128, and serine 132 each coordinate substrate. Residues glutamine 141–serine 142 and tryptophan 186 contribute to the FMN site. Residue arginine 192–histidine 194 coordinates substrate. An FMN-binding site is contributed by arginine 196.

This sequence belongs to the pyridoxamine 5'-phosphate oxidase family. In terms of assembly, homodimer. FMN serves as cofactor.

It catalyses the reaction pyridoxamine 5'-phosphate + O2 + H2O = pyridoxal 5'-phosphate + H2O2 + NH4(+). The catalysed reaction is pyridoxine 5'-phosphate + O2 = pyridoxal 5'-phosphate + H2O2. It functions in the pathway cofactor metabolism; pyridoxal 5'-phosphate salvage; pyridoxal 5'-phosphate from pyridoxamine 5'-phosphate: step 1/1. It participates in cofactor metabolism; pyridoxal 5'-phosphate salvage; pyridoxal 5'-phosphate from pyridoxine 5'-phosphate: step 1/1. In terms of biological role, catalyzes the oxidation of either pyridoxine 5'-phosphate (PNP) or pyridoxamine 5'-phosphate (PMP) into pyridoxal 5'-phosphate (PLP). This chain is Pyridoxine/pyridoxamine 5'-phosphate oxidase, found in Flavobacterium psychrophilum (strain ATCC 49511 / DSM 21280 / CIP 103535 / JIP02/86).